Consider the following 440-residue polypeptide: Chromosome partition protein MukF (440 aa).

The tract at residues 208–236 is leucine-zipper; it reads LDETSGNLRELQDTLNAAGDKLQSQLLRI.

This sequence belongs to the MukF family. In terms of assembly, interacts, and probably forms a ternary complex, with MukE and MukB via its C-terminal region. The complex formation is stimulated by calcium or magnesium. It is required for an interaction between MukE and MukB.

It is found in the cytoplasm. It localises to the nucleoid. Functionally, involved in chromosome condensation, segregation and cell cycle progression. May participate in facilitating chromosome segregation by condensation DNA from both sides of a centrally located replisome during cell division. Not required for mini-F plasmid partitioning. Probably acts via its interaction with MukB and MukE. Overexpression results in anucleate cells. It has a calcium binding activity. This is Chromosome partition protein MukF from Histophilus somni (strain 2336) (Haemophilus somnus).